We begin with the raw amino-acid sequence, 416 residues long: UDP-N-acetylglucosamine 1-carboxyvinyltransferase (416 aa).

Position 22-23 (22-23 (KN)) interacts with phosphoenolpyruvate. Arg91 serves as a coordination point for UDP-N-acetyl-alpha-D-glucosamine. The active-site Proton donor is the Cys115. At Cys115 the chain carries 2-(S-cysteinyl)pyruvic acid O-phosphothioketal. UDP-N-acetyl-alpha-D-glucosamine-binding residues include Asp304 and Ile326.

Belongs to the EPSP synthase family. MurA subfamily.

The protein localises to the cytoplasm. It carries out the reaction phosphoenolpyruvate + UDP-N-acetyl-alpha-D-glucosamine = UDP-N-acetyl-3-O-(1-carboxyvinyl)-alpha-D-glucosamine + phosphate. It participates in cell wall biogenesis; peptidoglycan biosynthesis. Cell wall formation. Adds enolpyruvyl to UDP-N-acetylglucosamine. The sequence is that of UDP-N-acetylglucosamine 1-carboxyvinyltransferase from Thermodesulfovibrio yellowstonii (strain ATCC 51303 / DSM 11347 / YP87).